The sequence spans 494 residues: ATP synthase subunit beta, chloroplastic (494 aa).

Residue 172-179 (GGAGVGKT) coordinates ATP.

The protein belongs to the ATPase alpha/beta chains family. As to quaternary structure, F-type ATPases have 2 components, CF(1) - the catalytic core - and CF(0) - the membrane proton channel. CF(1) has five subunits: alpha(3), beta(3), gamma(1), delta(1), epsilon(1). CF(0) has four main subunits: a(1), b(1), b'(1) and c(9-12).

The protein localises to the plastid. It is found in the chloroplast thylakoid membrane. The catalysed reaction is ATP + H2O + 4 H(+)(in) = ADP + phosphate + 5 H(+)(out). Its function is as follows. Produces ATP from ADP in the presence of a proton gradient across the membrane. The catalytic sites are hosted primarily by the beta subunits. This Physcomitrium patens (Spreading-leaved earth moss) protein is ATP synthase subunit beta, chloroplastic.